The chain runs to 369 residues: 4-hydroxyproline betaine 2-epimerase (369 aa).

Substrate-binding residues include Y56 and Q162. K164 serves as the catalytic Proton donor/acceptor. 3 residues coordinate Mg(2+): D194, E219, and D242. The active-site Proton donor/acceptor is the K266. A substrate-binding site is contributed by A295.

The protein belongs to the mandelate racemase/muconate lactonizing enzyme family. Mg(2+) serves as cofactor.

It catalyses the reaction trans-4-hydroxy-L-proline betaine = cis-4-hydroxy-D-proline betaine. The enzyme catalyses L-proline betaine = D-proline betaine. In terms of biological role, catalyzes the 2-epimerization of trans-4-hydroxy-L-proline betaine (tHyp-B) to cis-4-hydroxy-D-proline betaine (cHyp-B). Is involved in a catabolic pathway that degrades tHyp-B to alpha-ketoglutarate. This pathway would permit the utilization of tHyp-B as a carbon and nitrogen source in the absence of osmotic stress, since tHyp-B functions as an osmolyte and is not catabolized when it is needed as osmoprotectant. Can also catalyze the racemization of L-proline betaine. The protein is 4-hydroxyproline betaine 2-epimerase (hpbD) of Paracoccus denitrificans (strain Pd 1222).